A 458-amino-acid chain; its full sequence is tRNA modification GTPase MnmE (458 aa).

3 residues coordinate (6S)-5-formyl-5,6,7,8-tetrahydrofolate: R22, E84, and R123. A TrmE-type G domain is found at 220 to 379 (GISTAIIGRP…LEKAIADLFF (160 aa)). N230 is a binding site for K(+). GTP contacts are provided by residues 230-235 (NVGKSS), 249-255 (TDIAGTT), and 274-277 (DTAG). S234 is a Mg(2+) binding site. K(+) is bound by residues T249, I251, and T254. T255 contacts Mg(2+). K458 serves as a coordination point for (6S)-5-formyl-5,6,7,8-tetrahydrofolate.

Belongs to the TRAFAC class TrmE-Era-EngA-EngB-Septin-like GTPase superfamily. TrmE GTPase family. Homodimer. Heterotetramer of two MnmE and two MnmG subunits. K(+) serves as cofactor.

It localises to the cytoplasm. Functionally, exhibits a very high intrinsic GTPase hydrolysis rate. Involved in the addition of a carboxymethylaminomethyl (cmnm) group at the wobble position (U34) of certain tRNAs, forming tRNA-cmnm(5)s(2)U34. In Bacillus mycoides (strain KBAB4) (Bacillus weihenstephanensis), this protein is tRNA modification GTPase MnmE.